The following is an 865-amino-acid chain: Alanine--tRNA ligase (865 aa).

Residues His554, His558, Cys656, and His660 each contribute to the Zn(2+) site.

This sequence belongs to the class-II aminoacyl-tRNA synthetase family. It depends on Zn(2+) as a cofactor.

The protein localises to the cytoplasm. The enzyme catalyses tRNA(Ala) + L-alanine + ATP = L-alanyl-tRNA(Ala) + AMP + diphosphate. Functionally, catalyzes the attachment of alanine to tRNA(Ala) in a two-step reaction: alanine is first activated by ATP to form Ala-AMP and then transferred to the acceptor end of tRNA(Ala). Also edits incorrectly charged Ser-tRNA(Ala) and Gly-tRNA(Ala) via its editing domain. The chain is Alanine--tRNA ligase from Francisella philomiragia subsp. philomiragia (strain ATCC 25017 / CCUG 19701 / FSC 153 / O#319-036).